Consider the following 23-residue polypeptide: Basic phospholipase A2 Smb-N6 (23 aa).

Belongs to the phospholipase A2 family. Group II subfamily. Ca(2+) serves as cofactor. In terms of processing, contains 7 disulfide bonds. In terms of tissue distribution, expressed by the venom gland.

It localises to the secreted. It carries out the reaction a 1,2-diacyl-sn-glycero-3-phosphocholine + H2O = a 1-acyl-sn-glycero-3-phosphocholine + a fatty acid + H(+). In terms of biological role, snake venom phospholipase A2 (PLA2) that shows myotoxic activities. PLA2 catalyzes the calcium-dependent hydrolysis of the 2-acyl groups in 3-sn-phosphoglycerides. The sequence is that of Basic phospholipase A2 Smb-N6 from Sistrurus miliarius barbouri (Dusky pigmy rattlesnake).